The primary structure comprises 157 residues: SsrA-binding protein (157 aa).

Belongs to the SmpB family.

The protein resides in the cytoplasm. Required for rescue of stalled ribosomes mediated by trans-translation. Binds to transfer-messenger RNA (tmRNA), required for stable association of tmRNA with ribosomes. tmRNA and SmpB together mimic tRNA shape, replacing the anticodon stem-loop with SmpB. tmRNA is encoded by the ssrA gene; the 2 termini fold to resemble tRNA(Ala) and it encodes a 'tag peptide', a short internal open reading frame. During trans-translation Ala-aminoacylated tmRNA acts like a tRNA, entering the A-site of stalled ribosomes, displacing the stalled mRNA. The ribosome then switches to translate the ORF on the tmRNA; the nascent peptide is terminated with the 'tag peptide' encoded by the tmRNA and targeted for degradation. The ribosome is freed to recommence translation, which seems to be the essential function of trans-translation. This Chlorobium phaeovibrioides (strain DSM 265 / 1930) (Prosthecochloris vibrioformis (strain DSM 265)) protein is SsrA-binding protein.